The sequence spans 424 residues: MAKGAVKKEKFEYEFFGPIGALGVTVLTTVVSFGSFYICNEEGCPAKFSKISHIFKKTPLFDQKSLILYLLWFSTLTLLWKCTNGKWAKGTPIDDKGTRLLYKINGFNSACLILGVVCTSIYLLGASCMEFIWDNFLQLMFAAYVFSVVLCTFCYVQSFFGKQQLAKGGTSGNILFDWFIGRSLNPRIGNFDIKCFCELRPGLILWVVFDIAFACHQYLVLGGRITDSMVLVIIFHTWYVLDSLINESAVLTTMDITTDGFGYMLSFGDLVWVPFLYSLQARYLAFHPVDLGLVKTLAILCLQFLGYYIFRGANGQKNRFRSNPNDPKLKHLKFIQTKRGTKLLTSGWWGMARHINYFGDWIMAWAWCLPAGFGSPIPYFYVAYFGVLLVHRNARDDHKCRVKYGEDWEKYCKAVKYRIIPYVY.

The next 2 membrane-spanning stretches (helical) occupy residues 19–39 (IGAL…FYIC) and 112–132 (LILG…MEFI). Residues K317, R321, L344, W349, and 356–357 (NY) contribute to the NADP(+) site. Residues 370–390 (PAGFGSPIPYFYVAYFGVLLV) form a helical membrane-spanning segment. NADP(+) is bound by residues D396, 400 to 404 (CRVKY), and Y411.

It belongs to the ERG4/ERG24 family.

The protein localises to the endoplasmic reticulum membrane. The enzyme catalyses 4,4-dimethyl-5alpha-cholesta-8,24-dien-3beta-ol + NADP(+) = 4,4-dimethyl-5alpha-cholesta-8,14,24-trien-3beta-ol + NADPH + H(+). It functions in the pathway steroid biosynthesis; zymosterol biosynthesis; zymosterol from lanosterol: step 2/6. Its pathway is steroid metabolism; ergosterol biosynthesis. In terms of biological role, delta(14)-sterol reductase; part of the third module of ergosterol biosynthesis pathway that includes by the late steps of the pathway. Erg24 reduces the C14=C15 double bond of 4,4-dimethyl-cholesta-8,14,24-trienol to produce 4,4-dimethyl-cholesta-8,24-dienol. The third module or late pathway involves the ergosterol synthesis itself through consecutive reactions that mainly occur in the endoplasmic reticulum (ER) membrane. Firstly, the squalene synthase erg9 catalyzes the condensation of 2 farnesyl pyrophosphate moieties to form squalene, which is the precursor of all steroids. Secondly, squalene is converted into lanosterol by the consecutive action of the squalene epoxidase erg1 and the lanosterol synthase erg7. The lanosterol 14-alpha-demethylase erg11/cyp1 catalyzes C14-demethylation of lanosterol to produce 4,4'-dimethyl cholesta-8,14,24-triene-3-beta-ol. In the next steps, a complex process involving various demethylation, reduction and desaturation reactions catalyzed by the C-14 reductase erg24 and the C-4 demethylation complex erg25-erg26-erg27 leads to the production of zymosterol. Erg28 likely functions in the C-4 demethylation complex reaction by tethering erg26 and Erg27 to the endoplasmic reticulum or to facilitate interaction between these proteins. Then, the sterol 24-C-methyltransferase erg6 catalyzes the methyl transfer from S-adenosyl-methionine to the C-24 of zymosterol to form fecosterol. The C-8 sterol isomerase erg2 catalyzes the reaction which results in unsaturation at C-7 in the B ring of sterols and thus converts fecosterol to episterol. The sterol-C5-desaturases erg31 and erg32 then catalyze the introduction of a C-5 double bond in the B ring to produce 5-dehydroepisterol. The C-22 sterol desaturase erg5 further converts 5-dehydroepisterol into ergosta-5,7,22,24(28)-tetraen-3beta-ol by forming the C-22(23) double bond in the sterol side chain. Finally, ergosta-5,7,22,24(28)-tetraen-3beta-ol is substrate of the C-24(28) sterol reductase erg4 to produce ergosterol. In the genus Schizosaccharomyces, a second route exists between lanosterol and fecosterol, via the methylation of lanosterol to eburicol by erg6, followed by C14-demethylation by erg11/cyp1 and C4-demethylation by the demethylation complex erg25-erg26-erg27. This chain is Delta(14)-sterol reductase erg24, found in Schizosaccharomyces pombe (strain 972 / ATCC 24843) (Fission yeast).